Here is a 116-residue protein sequence, read N- to C-terminus: MNITKNLKETKAVGKYIRLSPHKVRRVLDQIRGRKYQEALIILEFMPYRACYHIKQILESAGANAEHNNGLNKNQLFITKAFADKGPTLKRFQPRAQGRAFPIHKPTCHITLGVSE.

The protein belongs to the universal ribosomal protein uL22 family. Part of the 50S ribosomal subunit.

The protein localises to the plastid. Its subcellular location is the chloroplast. In terms of biological role, this protein binds specifically to 23S rRNA. The globular domain of the protein is located near the polypeptide exit tunnel on the outside of the subunit, while an extended beta-hairpin is found that lines the wall of the exit tunnel in the center of the 70S ribosome. This is Large ribosomal subunit protein uL22c (rpl22) from Porphyra purpurea (Red seaweed).